Consider the following 398-residue polypeptide: GTPase Obg (398 aa).

Residues 1–159 (MKFVDEAPIS…RNLKLELKVL (159 aa)) enclose the Obg domain. The segment at 128-148 (TRFKSSTNRVPRKTTPGTEGE) is disordered. The OBG-type G domain maps to 160–333 (ADVGMLGLPN…LSGKIMDHLE (174 aa)). GTP is bound by residues 166-173 (GLPNAGKS), 191-195 (FTTLV), 213-216 (DIPG), 283-286 (NKID), and 314-316 (SAL). Mg(2+) contacts are provided by Ser-173 and Thr-193.

This sequence belongs to the TRAFAC class OBG-HflX-like GTPase superfamily. OBG GTPase family. As to quaternary structure, monomer. Mg(2+) serves as cofactor.

It localises to the cytoplasm. An essential GTPase which binds GTP, GDP and possibly (p)ppGpp with moderate affinity, with high nucleotide exchange rates and a fairly low GTP hydrolysis rate. Plays a role in control of the cell cycle, stress response, ribosome biogenesis and in those bacteria that undergo differentiation, in morphogenesis control. This is GTPase Obg from Cellvibrio japonicus (strain Ueda107) (Pseudomonas fluorescens subsp. cellulosa).